Reading from the N-terminus, the 531-residue chain is Aspartate--tRNA ligase, cytoplasmic (531 aa).

The interval 1–45 (MADAAEGEQPKLSKKELNKLARKAKKDEKAGEKGGNQQQAAAMDQ) is disordered. Residues 8–32 (EQPKLSKKELNKLARKAKKDEKAGE) are compositionally biased toward basic and acidic residues. Glu-259 contributes to the L-aspartate binding site. The interval 281-284 (QLYK) is aspartate. Residue Arg-303 coordinates L-aspartate. ATP is bound by residues 303–305 (RAE), 311–313 (RHM), and Glu-454. The L-aspartate site is built by Ser-457 and Arg-461. 502–505 (GLER) provides a ligand contact to ATP.

This sequence belongs to the class-II aminoacyl-tRNA synthetase family. Type 2 subfamily. In terms of assembly, homodimer.

The protein localises to the cytoplasm. It carries out the reaction tRNA(Asp) + L-aspartate + ATP = L-aspartyl-tRNA(Asp) + AMP + diphosphate. The protein is Aspartate--tRNA ligase, cytoplasmic of Caenorhabditis elegans.